Reading from the N-terminus, the 760-residue chain is MIVGKVLDMDEKTAIIMTDDFAFLNVVRTSEMAVGKKVKVLDSDIIKPKNSLRRYLPVAAVAACFVIVLSFVLMFINGNTARKNIYAYVGIDINPSIELWINYNNKIAEAKALNGDAETVLEGLELKEKTVAEAVNEIVQKSMELGFISREKENIILISTACDLKAGEGSENKDVQNKIGQLFDDVNKAVSDLKNSGITTRILNLTLEERESSKEENISMGRYAVYLKAKEQNVNLTIDEIKDADLLELIAKVGIDNENVPEDIVTEDKDNLDAINTGPAESAVPEVTETLPATSTPGRTEGNTATGSVDSTPALSKNETPGKTETPGRTFNTPAKSSLGQSSTPKPVSPVQTATATKGIGTLTPRNSPTPVIPSTGIQWIDQANERINEIRKRNVQIKVVDSSNKPIENAYVEAVLTNHAFGFGTAITRRAMYDSNYTKFIKDHFNWAVFENESKWYTNEPSMGIITYDDADYLYEFCRSNGIKVRGHCIFWEAEEWQPAWVRSLDPFTLRFAVDNRLNSAVGHFKGKFEHWDVNNEMIHGNFFKSRLGESIWPYMFNRAREIDPNAKYFVNNNITTLKEADDCVALVNWLRSQGVRVDGVGVHGHFGDSVDRNLLKGILDKLSVLNLPIWITEYDSVTPDEYRRADNLENLYRTAFSHPSVEGIVMWGFWERVHWRGRDASIVNDNWTLNEAGRRFESLMNEWTTRAYGSTDGSGSFGFRGFYGTYRITVTVPGKGKYNYTLNLNRGSGTLQTTYRIP.

Over 1–55 (MIVGKVLDMDEKTAIIMTDDFAFLNVVRTSEMAVGKKVKVLDSDIIKPKNSLRRY) the chain is Cytoplasmic. Residues 2 to 49 (IVGKVLDMDEKTAIIMTDDFAFLNVVRTSEMAVGKKVKVLDSDIIKPK) form the RsgI N-terminal anti-sigma domain. Residues 56-76 (LPVAAVAACFVIVLSFVLMFI) traverse the membrane as a helical segment. At 77–760 (NGNTARKNIY…GTLQTTYRIP (684 aa)) the chain is on the extracellular side. A disordered region spans residues 274-352 (AINTGPAESA…STPKPVSPVQ (79 aa)). Polar residues predominate over residues 291–352 (LPATSTPGRT…STPKPVSPVQ (62 aa)). One can recognise a GH10 domain in the interval 402–701 (DSSNKPIENA…NEAGRRFESL (300 aa)). Catalysis depends on glutamate 538, which acts as the Proton donor. The Nucleophile role is filled by glutamate 635.

In the C-terminal section; belongs to the glycosyl hydrolase 10 (cellulase F) family. Interacts (via RsgI N-terminal anti-sigma domain) with SigI6.

Its subcellular location is the cell membrane. The enzyme catalyses Endohydrolysis of (1-&gt;4)-beta-D-xylosidic linkages in xylans.. It functions in the pathway glycan degradation; xylan degradation. In terms of biological role, anti-sigma factor for SigI6. Negatively regulates SigI6 activity through direct interaction. Binding of the polysaccharide substrate to the extracellular C-terminal sensing domain of RsgI6 may induce a conformational change in its N-terminal cytoplasmic region, leading to the release and activation of SigI6. Binds to and hydrolyzes insoluble and soluble xylan substrates. Has low enzymatic activity. In Acetivibrio thermocellus (strain ATCC 27405 / DSM 1237 / JCM 9322 / NBRC 103400 / NCIMB 10682 / NRRL B-4536 / VPI 7372) (Clostridium thermocellum), this protein is Anti-sigma-I factor RsgI6.